A 313-amino-acid polypeptide reads, in one-letter code: Adhesin MafA 1 (313 aa).

Residues 1 to 14 form the signal peptide; the sequence is MKILLLLIPLVLTA. A lipid anchor (N-palmitoyl cysteine) is attached at Cys15. Cys15 carries S-diacylglycerol cysteine lipidation. Positions 282 to 298 are enriched in polar residues; it reads GDTTAQNRPDFKQNNGK. The disordered stretch occupies residues 282 to 313; that stretch reads GDTTAQNRPDFKQNNGKNPDVGNEVIRRRKGG.

Belongs to the MafA family.

Its subcellular location is the cell outer membrane. The chain is Adhesin MafA 1 (mafA1) from Neisseria meningitidis serogroup C / serotype 2a (strain ATCC 700532 / DSM 15464 / FAM18).